Here is a 540-residue protein sequence, read N- to C-terminus: Phosphoenolpyruvate carboxykinase (ATP) (540 aa).

Residue Arg-65 coordinates substrate. N6-acetyllysine is present on Lys-87. Residues Tyr-207 and Lys-213 each coordinate substrate. ATP-binding positions include Lys-213, His-232, and 248–256 (GLSGTGKTT). Residues Lys-213 and His-232 each coordinate Mn(2+). Asp-269 contributes to the Mn(2+) binding site. ATP contacts are provided by residues Glu-297, Arg-333, 449–450 (RI), and Thr-455. Arg-333 contributes to the substrate binding site. Lys-523 bears the N6-acetyllysine mark.

It belongs to the phosphoenolpyruvate carboxykinase (ATP) family. In terms of assembly, monomer. It depends on Mn(2+) as a cofactor.

The protein localises to the cytoplasm. It catalyses the reaction oxaloacetate + ATP = phosphoenolpyruvate + ADP + CO2. It participates in carbohydrate biosynthesis; gluconeogenesis. Its function is as follows. Involved in the gluconeogenesis. Catalyzes the conversion of oxaloacetate (OAA) to phosphoenolpyruvate (PEP) through direct phosphoryl transfer between the nucleoside triphosphate and OAA. The sequence is that of Phosphoenolpyruvate carboxykinase (ATP) from Escherichia coli O45:K1 (strain S88 / ExPEC).